The chain runs to 241 residues: Eukaryotic translation initiation factor 3 subunit J (241 aa).

Residues 1 to 27 show a composition bias toward basic and acidic residues; it reads MEEDWEQHGEKEEVPLPAKKPDANKWD. Positions 1–99 are disordered; that stretch reads MEEDWEQHGE…ENMTPEQKLA (99 aa). The span at 28 to 45 shows a compositional bias: acidic residues; sequence GEDEEEEVKDSWEDEDEL. Residues 31–119 are a coiled coil; sequence EEEEVKDSWE…ESDLKNALDT (89 aa). Basic and acidic residues-rich tracts occupy residues 46–58 and 69–90; these read EEKKDEEKVETPK and IVEKEKQKHEEAERRRLEKEAE.

It belongs to the eIF-3 subunit J family. Component of the eukaryotic translation initiation factor 3 (eIF-3) complex.

It is found in the cytoplasm. Component of the eukaryotic translation initiation factor 3 (eIF-3) complex, which is involved in protein synthesis of a specialized repertoire of mRNAs and, together with other initiation factors, stimulates binding of mRNA and methionyl-tRNAi to the 40S ribosome. The eIF-3 complex specifically targets and initiates translation of a subset of mRNAs involved in cell proliferation. This is Eukaryotic translation initiation factor 3 subunit J from Culex quinquefasciatus (Southern house mosquito).